The chain runs to 239 residues: Tetrahydromethanopterin S-methyltransferase subunit A (239 aa).

Residues 1-215 (MANKKSPAAT…EAAMIAKFNS (215 aa)) are Cytoplasmic-facing. His-85 is a binding site for 5-hydroxybenzimidazolylcob(I)amide. Residues 216-238 (GYYNGKIQGIAIGLFLSILVFSL) form a helical membrane-spanning segment. A topological domain (extracellular) is located at residue Leu-239.

The protein belongs to the MtrA family. As to quaternary structure, the complex is composed of 8 subunits; MtrA, MtrB, MtrC, MtrD, MtrE, MtrF, MtrG and MtrH. The cofactor is 5-hydroxybenzimidazolylcob(I)amide.

The protein localises to the cell membrane. It carries out the reaction 5-methyl-5,6,7,8-tetrahydromethanopterin + coenzyme M + 2 Na(+)(in) = 5,6,7,8-tetrahydromethanopterin + methyl-coenzyme M + 2 Na(+)(out). The protein operates within one-carbon metabolism; methanogenesis from CO(2); methyl-coenzyme M from 5,10-methylene-5,6,7,8-tetrahydromethanopterin: step 2/2. Functionally, part of a complex that catalyzes the formation of methyl-coenzyme M and tetrahydromethanopterin from coenzyme M and methyl-tetrahydromethanopterin. This is an energy-conserving, sodium-ion translocating step. The sequence is that of Tetrahydromethanopterin S-methyltransferase subunit A from Methanococcus maripaludis (strain C7 / ATCC BAA-1331).